Consider the following 1100-residue polypeptide: DNA-directed RNA polymerase subunit beta (1100 aa).

Positions 1064-1100 (YEEDKEVDLMADVNQRRTPSRPTYESMSVGDIDDDDD) are disordered. The span at 1079–1089 (RRTPSRPTYES) shows a compositional bias: polar residues.

It belongs to the RNA polymerase beta chain family. In terms of assembly, in cyanobacteria the RNAP catalytic core is composed of 2 alpha, 1 beta, 1 beta', 1 gamma and 1 omega subunit. When a sigma factor is associated with the core the holoenzyme is formed, which can initiate transcription.

The enzyme catalyses RNA(n) + a ribonucleoside 5'-triphosphate = RNA(n+1) + diphosphate. Its function is as follows. DNA-dependent RNA polymerase catalyzes the transcription of DNA into RNA using the four ribonucleoside triphosphates as substrates. The sequence is that of DNA-directed RNA polymerase subunit beta from Synechococcus sp. (strain ATCC 27144 / PCC 6301 / SAUG 1402/1) (Anacystis nidulans).